The primary structure comprises 110 residues: Heat shock protein Hsp-12.2 (110 aa).

A sHSP domain is found at 15-110 (DWPLQHNDGV…VLTITASKKA (96 aa)).

It belongs to the small heat shock protein (HSP20) family.

The protein is Heat shock protein Hsp-12.2 (hsp-12.2) of Caenorhabditis elegans.